The sequence spans 493 residues: Glutamyl-tRNA(Gln) amidotransferase subunit A (493 aa).

Residues lysine 79 and serine 159 each act as charge relay system in the active site. The active-site Acyl-ester intermediate is the serine 183.

This sequence belongs to the amidase family. GatA subfamily. In terms of assembly, heterotrimer of A, B and C subunits.

The enzyme catalyses L-glutamyl-tRNA(Gln) + L-glutamine + ATP + H2O = L-glutaminyl-tRNA(Gln) + L-glutamate + ADP + phosphate + H(+). Its function is as follows. Allows the formation of correctly charged Gln-tRNA(Gln) through the transamidation of misacylated Glu-tRNA(Gln) in organisms which lack glutaminyl-tRNA synthetase. The reaction takes place in the presence of glutamine and ATP through an activated gamma-phospho-Glu-tRNA(Gln). This chain is Glutamyl-tRNA(Gln) amidotransferase subunit A, found in Agrobacterium fabrum (strain C58 / ATCC 33970) (Agrobacterium tumefaciens (strain C58)).